A 315-amino-acid polypeptide reads, in one-letter code: Methenyltetrahydromethanopterin cyclohydrolase (315 aa).

The protein belongs to the MCH family.

It localises to the cytoplasm. The enzyme catalyses 5,10-methenyl-5,6,7,8-tetrahydromethanopterin + H2O = N(5)-formyl-5,6,7,8-tetrahydromethanopterin + H(+). It functions in the pathway one-carbon metabolism; methanogenesis from CO(2); 5,10-methenyl-5,6,7,8-tetrahydromethanopterin from CO(2): step 3/3. Functionally, catalyzes the reversible interconversion of 5-formyl-H(4)MPT to methenyl-H(4)MPT(+). This Methanosphaerula palustris (strain ATCC BAA-1556 / DSM 19958 / E1-9c) protein is Methenyltetrahydromethanopterin cyclohydrolase.